The chain runs to 692 residues: Elongation factor G (692 aa).

Residues 8 to 282 form the tr-type G domain; that stretch reads ENTRNIGIMA…AVIDYLPSPL (275 aa). GTP is bound by residues 17 to 24, 81 to 85, and 135 to 138; these read AHIDAGKT, DTPGH, and NKMD.

This sequence belongs to the TRAFAC class translation factor GTPase superfamily. Classic translation factor GTPase family. EF-G/EF-2 subfamily.

Its subcellular location is the cytoplasm. Catalyzes the GTP-dependent ribosomal translocation step during translation elongation. During this step, the ribosome changes from the pre-translocational (PRE) to the post-translocational (POST) state as the newly formed A-site-bound peptidyl-tRNA and P-site-bound deacylated tRNA move to the P and E sites, respectively. Catalyzes the coordinated movement of the two tRNA molecules, the mRNA and conformational changes in the ribosome. This is Elongation factor G from Bacillus thuringiensis subsp. konkukian (strain 97-27).